A 152-amino-acid polypeptide reads, in one-letter code: uncharacterized protein (152 aa).

Residues 127 to 152 (EKEKAERKAEKAKKNKKKSSTKTKKK) are disordered. Positions 136–152 (EKAKKNKKKSSTKTKKK) are enriched in basic residues.

The protein belongs to the mimivirus R546 family.

This is an uncharacterized protein from Sputnik virophage.